Here is a 281-residue protein sequence, read N- to C-terminus: MIKIAVPNKGSLSEAALEILKEAGYKGRGHNKSLNVVDEENGVEFFFLRPKDIAIYVAQGVLDLGITGRDLALDSRAKFNEVLALNFGGSTFRYAAPAGEEWDVAKLQGKRIATSYPNVVRDHLAANGIDAEVIRLDGAVEISIHLGVADVIADVVSTGTTLRQQGLEPFGEPIVTSEAVVIKREGEDVTADENVVLSRIRGILNARHYVMLDYNVAEEKLPNVEAVTPGLTGPTISPLAREGWVAVRVMVPRKLANQVMDSLEELGAEAILASDLRIARF.

It belongs to the ATP phosphoribosyltransferase family. Long subfamily. The cofactor is Mg(2+).

It is found in the cytoplasm. It catalyses the reaction 1-(5-phospho-beta-D-ribosyl)-ATP + diphosphate = 5-phospho-alpha-D-ribose 1-diphosphate + ATP. Its pathway is amino-acid biosynthesis; L-histidine biosynthesis; L-histidine from 5-phospho-alpha-D-ribose 1-diphosphate: step 1/9. With respect to regulation, feedback inhibited by histidine. In terms of biological role, catalyzes the condensation of ATP and 5-phosphoribose 1-diphosphate to form N'-(5'-phosphoribosyl)-ATP (PR-ATP). Has a crucial role in the pathway because the rate of histidine biosynthesis seems to be controlled primarily by regulation of HisG enzymatic activity. This Corynebacterium aurimucosum (strain ATCC 700975 / DSM 44827 / CIP 107346 / CN-1) (Corynebacterium nigricans) protein is ATP phosphoribosyltransferase.